The sequence spans 494 residues: Cardiolipin synthase (494 aa).

A run of 2 helical transmembrane segments spans residues 14–34 (IILN…AFTI) and 45–65 (IWAW…LYLL). PLD phosphodiesterase domains are found at residues 229–256 (MNNR…GDEY) and 407–434 (DNGF…DHRS). Active-site residues include His-234, Lys-236, Asp-241, His-412, Lys-414, and Asp-419.

The protein belongs to the phospholipase D family. Cardiolipin synthase subfamily.

The protein localises to the cell membrane. It carries out the reaction 2 a 1,2-diacyl-sn-glycero-3-phospho-(1'-sn-glycerol) = a cardiolipin + glycerol. Functionally, catalyzes the reversible phosphatidyl group transfer from one phosphatidylglycerol molecule to another to form cardiolipin (CL) (diphosphatidylglycerol) and glycerol. The protein is Cardiolipin synthase (cls) of Staphylococcus aureus (strain Mu50 / ATCC 700699).